The primary structure comprises 517 residues: DNA-(apurinic or apyrimidinic site) endonuclease 2 (517 aa).

The Mg(2+) site is built by N9 and E34. The short motif at 82-90 (EEGLSGVFC) is the Claspin-like CKB motif element. Y142 is an active-site residue. The Mg(2+) site is built by D183, N185, D299, and H300. D183 (proton donor/acceptor) is an active-site residue. H300 functions as the Proton acceptor in the catalytic mechanism. The span at 347-362 (GNTTEESSELTGTPSF) shows a compositional bias: polar residues. The disordered stretch occupies residues 347 to 366 (GNTTEESSELTGTPSFTEGA). Positions 395–402 (QGNLLSFF) match the PCNA interacting protein (PIP) box motif. Residues C463, H466, C489, and C503 each contribute to the Zn(2+) site. Residues 463 to 512 (CKGHSEPCVLRTVKKAGPNCGRQFYVCARPEGHSSNPQARCNFFLWLTKK) form a GRF-type zinc finger.

Belongs to the DNA repair enzymes AP/ExoA family. Interacts (via PIP box and GRF-type Zinc finger domain) with pcna; the interaction is required for 3 -5 SSB end resection, assembly of a checkpoint protein complex to SSB sites, and SSB signaling. Interacts with chek1. Mg(2+) serves as cofactor. It depends on Mn(2+) as a cofactor. In terms of tissue distribution, expressed in eggs (at protein level).

It localises to the nucleus. Its subcellular location is the chromosome. It is found in the cytoplasm. The protein resides in the mitochondrion. It catalyses the reaction Exonucleolytic cleavage in the 3'- to 5'-direction to yield nucleoside 5'-phosphates.. Its activity is regulated as follows. 3'-5' nuclease activity is stimulated in presence of pcna. Its function is as follows. Functions as a weak apurinic/apyrimidinic (AP) endodeoxyribonuclease in the DNA base excision repair (BER) pathway of DNA lesions induced by oxidative and alkylating agents. Initiates repair of AP sites in DNA by catalyzing hydrolytic incision of the phosphodiester backbone immediately adjacent to the damage, generating a single-strand break with 5'-deoxyribose phosphate and 3'-hydroxyl ends. Exhibits 3'-5' exonuclease activity on a 3' DNA substrate; nuclease activity is stimulated by interaction with pcna. Has a preference for the 3' recessed ends over blunt-ended substrates, in both the presence and the absence of pcna. Generates single-stranded DNA (ssDNA) via 3'-5' single-strand break (SSB) end resection, thereby promoting a DNA damage response via replication protein A (rpa2)-binding to ssDNA and the recruitment of a checkpoint protein complex, including atr, atr-interacting protein atrip, and rad9, to damage sites following oxidative stress. Plays a role in reversing blocked 3' DNA ends, problematic lesions that preclude DNA synthesis. Required for chek1 phosphorylation induced by hydrogen peroxide but not by stalled replication forks. The sequence is that of DNA-(apurinic or apyrimidinic site) endonuclease 2 from Xenopus laevis (African clawed frog).